Consider the following 300-residue polypeptide: ADP-polyphosphate phosphotransferase 1 (300 aa).

This sequence belongs to the polyphosphate kinase 2 (PPK2) family. Class I subfamily. Homotetramer. Requires Mg(2+) as cofactor.

The catalysed reaction is [phosphate](n) + ATP = [phosphate](n+1) + ADP. It carries out the reaction [phosphate](n) + GTP = [phosphate](n+1) + GDP. Functionally, uses inorganic polyphosphate (polyP) as a donor to convert ADP to ATP. Can also convert GDP to GTP, with lower efficiency. Cannot dephosphorylate ATP in the presence of polyP. The protein is ADP-polyphosphate phosphotransferase 1 of Rhizobium meliloti (strain 1021) (Ensifer meliloti).